A 225-amino-acid polypeptide reads, in one-letter code: UPF0758 protein AZOSEA04420 (225 aa).

Residues valine 102–leucine 225 form the MPN domain. Residues histidine 173, histidine 175, and aspartate 186 each contribute to the Zn(2+) site. A JAMM motif motif is present at residues histidine 173–aspartate 186.

The protein belongs to the UPF0758 family.

This is UPF0758 protein AZOSEA04420 from Aromatoleum aromaticum (strain DSM 19018 / LMG 30748 / EbN1) (Azoarcus sp. (strain EbN1)).